Reading from the N-terminus, the 247-residue chain is tRNA (guanine-N(1)-)-methyltransferase (247 aa).

S-adenosyl-L-methionine-binding positions include glycine 113 and 133 to 138; that span reads IGDFVM.

Belongs to the RNA methyltransferase TrmD family. As to quaternary structure, homodimer.

The protein resides in the cytoplasm. The catalysed reaction is guanosine(37) in tRNA + S-adenosyl-L-methionine = N(1)-methylguanosine(37) in tRNA + S-adenosyl-L-homocysteine + H(+). Specifically methylates guanosine-37 in various tRNAs. This chain is tRNA (guanine-N(1)-)-methyltransferase, found in Vibrio campbellii (strain ATCC BAA-1116).